The sequence spans 572 residues: uncharacterized protein (572 aa).

Residues 543–572 form a disordered region; the sequence is AYKKSSNTNSTTNSMNPRRSTVSSEDWVLN. Positions 547 to 563 are enriched in low complexity; that stretch reads SSNTNSTTNSMNPRRST.

This is an uncharacterized protein from Acanthamoeba polyphaga (Amoeba).